A 379-amino-acid polypeptide reads, in one-letter code: UPF0754 protein BpOF4_11355 (379 aa).

2 consecutive transmembrane segments (helical) span residues 6-26 (FIGF…SLAI) and 359-379 (LGAL…LFIG).

Belongs to the UPF0754 family.

Its subcellular location is the cell membrane. The sequence is that of UPF0754 protein BpOF4_11355 from Alkalihalophilus pseudofirmus (strain ATCC BAA-2126 / JCM 17055 / OF4) (Bacillus pseudofirmus).